Here is a 123-residue protein sequence, read N- to C-terminus: Large ribosomal subunit protein bL12 (123 aa).

It belongs to the bacterial ribosomal protein bL12 family. In terms of assembly, homodimer. Part of the ribosomal stalk of the 50S ribosomal subunit. Forms a multimeric L10(L12)X complex, where L10 forms an elongated spine to which 2 to 4 L12 dimers bind in a sequential fashion. Binds GTP-bound translation factors.

In terms of biological role, forms part of the ribosomal stalk which helps the ribosome interact with GTP-bound translation factors. Is thus essential for accurate translation. In Haemophilus influenzae (strain 86-028NP), this protein is Large ribosomal subunit protein bL12.